We begin with the raw amino-acid sequence, 110 residues long: MKFCPKCGNLMLPDRKRKVWVCRSCGYEEPFDEEKDREKTKITKKVEHKPDEEIIVVEQDLKTLPTTKVTCPKCGNDTAYWWEMQTRAGDEPSTIFYKCTKCGYTWRAYE.

Positions 4, 7, 22, 25, 71, 74, 99, and 102 each coordinate Zn(2+). The segment at 67–107 (TKVTCPKCGNDTAYWWEMQTRAGDEPSTIFYKCTKCGYTWR) adopts a TFIIS-type zinc-finger fold.

The protein belongs to the archaeal rpoM/eukaryotic RPA12/RPB9/RPC11 RNA polymerase family.

The protein resides in the chromosome. Its function is as follows. Involved in transcriptional proofreading and fidelity. Induces RNA cleavage activity in RNA polymerase (RNAP). Stimulates transcription elongation by RNAP on both naked DNA and histone-bound DNA (chromatin), facilitating transcription through the histone barrier. Stimulation depends on transcript cleavage. In the presence of TFS, the cleavage activity of RNAP truncates RNA back to position +15 in a stepwise manner by releasing mainly dinucleotides from the 3'-end of the nascent RNA. The truncated RNAs are able to continue elongation. Misincorporation of nucleotides during elongation of transcription leads to arrested elongation complexes which are rescued by TFS-promoted removal of a dinucleotide from the 3'-end. TFS is able to induce a cleavage resynthesis cycle in stalled elongation complexes (resulting from the next missing nucleotide or a reduced incorporation rate of a wrong nucleotide) preventing misincorporation and enabling proofreading in a post-incorporation manner. Pausing of elongation complexes is the main determinant of TFS-induced RNA cleavage. This chain is Transcription factor S, found in Thermococcus kodakarensis (strain ATCC BAA-918 / JCM 12380 / KOD1) (Pyrococcus kodakaraensis (strain KOD1)).